Reading from the N-terminus, the 354-residue chain is UDP-N-acetylglucosamine--N-acetylmuramyl-(pentapeptide) pyrophosphoryl-undecaprenol N-acetylglucosamine transferase (354 aa).

UDP-N-acetyl-alpha-D-glucosamine is bound by residues 11-13 (TAG), Arg164, Ser194, and Gln289.

The protein belongs to the glycosyltransferase 28 family. MurG subfamily.

It is found in the cell membrane. It carries out the reaction di-trans,octa-cis-undecaprenyl diphospho-N-acetyl-alpha-D-muramoyl-L-alanyl-D-glutamyl-meso-2,6-diaminopimeloyl-D-alanyl-D-alanine + UDP-N-acetyl-alpha-D-glucosamine = di-trans,octa-cis-undecaprenyl diphospho-[N-acetyl-alpha-D-glucosaminyl-(1-&gt;4)]-N-acetyl-alpha-D-muramoyl-L-alanyl-D-glutamyl-meso-2,6-diaminopimeloyl-D-alanyl-D-alanine + UDP + H(+). The protein operates within cell wall biogenesis; peptidoglycan biosynthesis. In terms of biological role, cell wall formation. Catalyzes the transfer of a GlcNAc subunit on undecaprenyl-pyrophosphoryl-MurNAc-pentapeptide (lipid intermediate I) to form undecaprenyl-pyrophosphoryl-MurNAc-(pentapeptide)GlcNAc (lipid intermediate II). The chain is UDP-N-acetylglucosamine--N-acetylmuramyl-(pentapeptide) pyrophosphoryl-undecaprenol N-acetylglucosamine transferase from Clostridium botulinum (strain Langeland / NCTC 10281 / Type F).